The chain runs to 832 residues: Armadillo segment polarity protein (832 aa).

The segment covering 1 to 20 has biased composition (polar residues); that stretch reads MSYQMPQNRTMSHNPYNSSD. The tract at residues 1–24 is disordered; sequence MSYQMPQNRTMSHNPYNSSDMPMP. ARM repeat units follow at residues 146–185, 188–228, 230–269, 272–311, 356–395, 397–434, 483–524, 594–634, and 636–675; these read NYQD…QLSK, ASRH…NLSH, RQGL…NLLL, DGSK…ILAY, SSNK…NLSD, ATKV…NLTC, SESA…NLAL, ELNR…ELAV, and KEVA…KMSE. The interval 721-832 is disordered; sequence AYEGLYGQGP…QVAAWYDTDL (112 aa). Over residues 767-777 the composition is skewed to low complexity; it reads PAGSNPNAGNN.

This sequence belongs to the beta-catenin family.

It localises to the cytoplasm. It is found in the cell membrane. The protein resides in the cell junction. Its subcellular location is the adherens junction. May associate with CadN and participate in the transmission of developmental information. Can associate with alpha-catenin. Accumulates through wg signaling; arm function in wg signal transduction is required early in development for determination of neuroblast fate. Arm and Abl proteins function cooperatively at adherens junctions in both the CNS and epidermis. This is Armadillo segment polarity protein from Aedes aegypti (Yellowfever mosquito).